Consider the following 480-residue polypeptide: Pre-glycoprotein polyprotein GP complex (480 aa).

A lipid anchor (N-myristoyl glycine; by host) is attached at G2. Over 2–17 (GQLVSFFQEIPVFFQE) the chain is Extracellular. Residues 18–33 (ALNIALAVVTLLAIVK) traverse the membrane as a helical segment. The Cytoplasmic segment spans residues 34 to 58 (GVLNLWKSGLFQLLMFLILAGRSCS). C57 is a Zn(2+) binding site. Residues 59–419 (FRIGYHTSFE…QGRTPLTLVD (361 aa)) lie on the Extracellular side of the membrane. Intrachain disulfides connect C85–C221, C266–C279, C288–C297, and C351–C372. N-linked (GlcNAc...) asparagine; by host glycans are attached at residues N88, N174, and N214. Residues N352, N360, N377, and N382 are each glycosylated (N-linked (GlcNAc...) asparagine; by host). A helical transmembrane segment spans residues 420-440 (LCFWSAVFYTTTLFLHLVGFP). Residues 441-480 (THRHISGEPCPLPHRLNRHGACNCGRFKRLKKPLVWYKHH) lie on the Cytoplasmic side of the membrane. The Zn(2+) site is built by H442, H444, C450, H454, C462, C464, and H480.

The protein belongs to the arenaviridae GPC protein family. As to quaternary structure, interacts with glycoprotein G2. Part of the GP complex (GP-C) together with glycoprotein G1 and glycoprotein G2. The GP-complex interacts with protein Z, which interacts with ribonucleocapsid; these interactions may induce virion budding. Homotrimer; disulfide-linked. In pre-fusion state, G1 homotrimers bind G2 homotrimers via ionic interactions. Part of the GP complex (GP-C) together with glycoprotein G2 and the stable signal peptide. The GP-complex interacts with protein Z, which interacts with ribonucleocapsid; these interactions may induce virion budding. In terms of assembly, homotrimer. Interacts with the stable signal peptide. In pre-fusion state, G2 homotrimers bind G1 homotrimers via ionic interactions. Part of the GP complex (GP-C) together with glycoprotein G1 and the stable signal peptide. Acidification in the endosome triggers rearrangements, which ultimately leads to a 6 helix bundle formed by the two heptad repeat domains (HR1 and HR2) in post-fusion state. The GP-complex interacts with protein Z, which interacts with ribonucleocapsid; these interactions may induce virion budding. In terms of processing, specific enzymatic cleavages in vivo yield mature proteins. GP-C polyprotein is cleaved in the endoplasmic reticulum by the host protease MBTPS1. Only cleaved glycoprotein is incorporated into virions. The SSP remains stably associated with the GP complex following cleavage by signal peptidase and plays crucial roles in the trafficking of GP through the secretory pathway. Post-translationally, myristoylation is necessary for GP2-mediated fusion activity.

Its subcellular location is the virion membrane. It is found in the host endoplasmic reticulum membrane. The protein localises to the host Golgi apparatus membrane. It localises to the host cell membrane. Functionally, functions as a cleaved signal peptide that is retained as the third component of the GP complex (GP-C). Helps to stabilize the spike complex in its native conformation. The SSP is required for efficient glycoprotein expression, post-translational maturation cleavage of G1 and G2, glycoprotein transport to the cell surface plasma membrane, formation of infectious virus particles, and acid pH-dependent glycoprotein-mediated cell fusion. In terms of biological role, forms the virion spikes together with glycoprotein G2. The glycoprotein spike trimers are connected to the underlying matrix. Interacts with the host receptor leading to virus endocytosis. Its function is as follows. Forms the virion spikes together with glycoprotein G1. The glycoprotein spike trimers are connected to the underlying matrix. Class I viral fusion protein that directs fusion of viral and host endosomal membranes, leading to delivery of the nucleocapsid into the cytoplasm. Membrane fusion is mediated by irreversible conformational changes induced by acidification. The sequence is that of Pre-glycoprotein polyprotein GP complex from Cupixi mammarenavirus (isolate Rat/Brasil/BeAn 119303/1970) (CPXV).